A 43-amino-acid chain; its full sequence is Protein PsbN (43 aa).

The helical transmembrane segment at 5 to 27 threads the bilayer; it reads TLIAIFISCSLVSFTGYALYTAF.

The protein belongs to the PsbN family.

It localises to the plastid. The protein resides in the chloroplast thylakoid membrane. In terms of biological role, may play a role in photosystem I and II biogenesis. This is Protein PsbN from Lopidium concinnum (Moss).